We begin with the raw amino-acid sequence, 883 residues long: AP-5 complex subunit beta-1 (883 aa).

In terms of assembly, probably part of the adaptor protein complex 5 (AP-5).

Its function is as follows. As part of AP-5, a probable fifth adaptor protein complex, it may be involved in endosomal transport. The chain is AP-5 complex subunit beta-1 (ap5b1) from Xenopus tropicalis (Western clawed frog).